A 585-amino-acid polypeptide reads, in one-letter code: Potassium-transporting ATPase potassium-binding subunit (585 aa).

The next 12 helical transmembrane spans lie at 23-43 (GVII…ILSF), 85-105 (FINL…VIMF), 152-172 (FVIT…SMAF), 194-214 (IFDL…LAGI), 275-295 (VEFV…GIVF), 307-327 (VVMF…FAGV), 345-365 (AIGI…STGA), 367-387 (NAAL…GLLL), 397-417 (GVLN…LMVG), 444-464 (LLVV…SSFV), 502-522 (LDGV…LIIA), and 547-567 (VLLI…IIVL).

The protein belongs to the KdpA family. In terms of assembly, the system is composed of three essential subunits: KdpA, KdpB and KdpC.

Its subcellular location is the cell membrane. Functionally, part of the high-affinity ATP-driven potassium transport (or Kdp) system, which catalyzes the hydrolysis of ATP coupled with the electrogenic transport of potassium into the cytoplasm. This subunit binds the extracellular potassium ions and delivers the ions to the membrane domain of KdpB through an intramembrane tunnel. The chain is Potassium-transporting ATPase potassium-binding subunit from Thermoplasma acidophilum (strain ATCC 25905 / DSM 1728 / JCM 9062 / NBRC 15155 / AMRC-C165).